Here is a 44-residue protein sequence, read N- to C-terminus: DVCDSLVDGRCIHNGCFCEESKPNGNCCDSGGCVWWWCPGTKWD.

4 cysteine pairs are disulfide-bonded: cysteine 3/cysteine 16, cysteine 11/cysteine 28, cysteine 18/cysteine 33, and cysteine 27/cysteine 38. Proline 23 carries the 4-hydroxyproline modification. 6'-bromotryptophan is present on residues tryptophan 36 and tryptophan 37. Proline 39 carries the post-translational modification 4-hydroxyproline. A 6'-bromotryptophan modification is found at tryptophan 43.

In terms of tissue distribution, expressed by the venom duct.

The protein localises to the secreted. In terms of biological role, mu-conotoxins block voltage-gated sodium channels. This toxin reversibly blocks voltage-gated sodium channel in cephalopods, with no alteration in the voltage dependence of sodium conductance or on the kinetics of inactivation. The sequence is that of Mu-conotoxin-like Cal 12.1.3b from Californiconus californicus (California cone).